A 332-amino-acid polypeptide reads, in one-letter code: Large ribosomal subunit protein mL44 (332 aa).

The N-terminal 30 residues, 1–30 (MASGLVRLLQQGHRCLLAPVAPKLVPPVRG), are a transit peptide targeting the mitochondrion. An RNase III domain is found at 86–228 (DLLKTAFVNS…LITQMTGKEL (143 aa)). The DRBM domain maps to 236 to 306 (NPMGLLVEEL…ARVALRKLYG (71 aa)).

The protein belongs to the ribonuclease III family. Mitochondrion-specific ribosomal protein mL44 subfamily. In terms of assembly, component of the mitochondrial large ribosomal subunit (mt-LSU). Mature mammalian 55S mitochondrial ribosomes consist of a small (28S) and a large (39S) subunit. The 28S small subunit contains a 12S ribosomal RNA (12S mt-rRNA) and 30 different proteins. The 39S large subunit contains a 16S rRNA (16S mt-rRNA), a copy of mitochondrial valine transfer RNA (mt-tRNA(Val)), which plays an integral structural role, and 52 different proteins.

The protein localises to the mitochondrion. Component of the 39S subunit of mitochondrial ribosome. May have a function in the assembly/stability of nascent mitochondrial polypeptides exiting the ribosome. This is Large ribosomal subunit protein mL44 (MRPL44) from Homo sapiens (Human).